Here is a 484-residue protein sequence, read N- to C-terminus: tRNA sulfurtransferase (484 aa).

Positions 63–167 (EAFAERLACI…NDNLYLIDKR (105 aa)) constitute a THUMP domain. ATP contacts are provided by residues 185 to 186 (LI), lysine 267, glycine 289, and glutamine 298. Residues cysteine 346 and cysteine 458 are joined by a disulfide bond. The region spanning 406–484 (ISAGEIIIDV…GYNNVKVYRP (79 aa)) is the Rhodanese domain. The active-site Cysteine persulfide intermediate is cysteine 458.

Belongs to the ThiI family.

It localises to the cytoplasm. It catalyses the reaction [ThiI sulfur-carrier protein]-S-sulfanyl-L-cysteine + a uridine in tRNA + 2 reduced [2Fe-2S]-[ferredoxin] + ATP + H(+) = [ThiI sulfur-carrier protein]-L-cysteine + a 4-thiouridine in tRNA + 2 oxidized [2Fe-2S]-[ferredoxin] + AMP + diphosphate. The catalysed reaction is [ThiS sulfur-carrier protein]-C-terminal Gly-Gly-AMP + S-sulfanyl-L-cysteinyl-[cysteine desulfurase] + AH2 = [ThiS sulfur-carrier protein]-C-terminal-Gly-aminoethanethioate + L-cysteinyl-[cysteine desulfurase] + A + AMP + 2 H(+). It participates in cofactor biosynthesis; thiamine diphosphate biosynthesis. Catalyzes the ATP-dependent transfer of a sulfur to tRNA to produce 4-thiouridine in position 8 of tRNAs, which functions as a near-UV photosensor. Also catalyzes the transfer of sulfur to the sulfur carrier protein ThiS, forming ThiS-thiocarboxylate. This is a step in the synthesis of thiazole, in the thiamine biosynthesis pathway. The sulfur is donated as persulfide by IscS. The polypeptide is tRNA sulfurtransferase (Shewanella pealeana (strain ATCC 700345 / ANG-SQ1)).